The sequence spans 179 residues: MYNINDLIYNWSFALFDLANDEGILKELTADVVKVIKVLKRNKRYLEILNSYNVDLDVKFQKIDEAFSGNNIHLINFIKLAAKAAVAKFLIQILVRFVEISNQKLNVKYGTIFTTIALDEVKVKEFESKISKKLNAKVILKNEIDPSLIAGIKIKIDDYVVENSISGYLNELKKSVIKK.

The protein belongs to the ATPase delta chain family. F-type ATPases have 2 components, F(1) - the catalytic core - and F(0) - the membrane proton channel. F(1) has five subunits: alpha(3), beta(3), gamma(1), delta(1), epsilon(1). F(0) has three main subunits: a(1), b(2) and c(10-14). The alpha and beta chains form an alternating ring which encloses part of the gamma chain. F(1) is attached to F(0) by a central stalk formed by the gamma and epsilon chains, while a peripheral stalk is formed by the delta and b chains.

The protein localises to the cell membrane. Its function is as follows. F(1)F(0) ATP synthase produces ATP from ADP in the presence of a proton or sodium gradient. F-type ATPases consist of two structural domains, F(1) containing the extramembraneous catalytic core and F(0) containing the membrane proton channel, linked together by a central stalk and a peripheral stalk. During catalysis, ATP synthesis in the catalytic domain of F(1) is coupled via a rotary mechanism of the central stalk subunits to proton translocation. This protein is part of the stalk that links CF(0) to CF(1). It either transmits conformational changes from CF(0) to CF(1) or is implicated in proton conduction. The protein is ATP synthase subunit delta of Metamycoplasma arthritidis (strain 158L3-1) (Mycoplasma arthritidis).